Consider the following 243-residue polypeptide: uncharacterized protein (243 aa).

In terms of domain architecture, GP-PDE spans 2-240; sequence TKIFAHRGAS…DFPEKASALL (239 aa).

This is an uncharacterized protein from Bacillus subtilis (strain 168).